The primary structure comprises 141 residues: Hemoglobin subunit alpha (141 aa).

Positions 1–141 (VLSSADKNNV…VSTVLTSKYR (141 aa)) constitute a Globin domain. The residue at position 3 (S3) is a Phosphoserine. 2 positions are modified to N6-succinyllysine: K7 and K11. K16 is modified (N6-acetyllysine; alternate). K16 carries the post-translational modification N6-succinyllysine; alternate. Phosphotyrosine is present on Y24. S35 carries the phosphoserine modification. K40 is modified (N6-succinyllysine). S49 bears the Phosphoserine mark. O2 is bound at residue H58. H87 is a binding site for heme b. S102 is subject to Phosphoserine. T108 carries the phosphothreonine modification. Position 124 is a phosphoserine (S124). Residues T134 and T137 each carry the phosphothreonine modification. Residue S138 is modified to Phosphoserine.

Belongs to the globin family. In terms of assembly, heterotetramer of two alpha chains and two beta chains. In terms of tissue distribution, red blood cells.

Involved in oxygen transport from the lung to the various peripheral tissues. Functionally, hemopressin acts as an antagonist peptide of the cannabinoid receptor CNR1. Hemopressin-binding efficiently blocks cannabinoid receptor CNR1 and subsequent signaling. This Panthera pardus saxicolor (Northern Persian leopard) protein is Hemoglobin subunit alpha (HBA).